We begin with the raw amino-acid sequence, 507 residues long: Probable aldehyde dehydrogenase (507 aa).

Residue 219-225 participates in NAD(+) binding; sequence GFGVEAG. Catalysis depends on residues E263 and C302.

It belongs to the aldehyde dehydrogenase family.

It carries out the reaction an aldehyde + NAD(+) + H2O = a carboxylate + NADH + 2 H(+). This chain is Probable aldehyde dehydrogenase, found in Streptomyces coelicolor (strain ATCC BAA-471 / A3(2) / M145).